The primary structure comprises 259 residues: Pimeloyl-[acyl-carrier protein] methyl ester esterase (259 aa).

Residues 15–242 form the AB hydrolase-1 domain; sequence HLVLLHGWGL…AAHAPFISHP (228 aa). Substrate is bound by residues Trp-22, 82–83, and 143–147; these read SL and FLALQ. The Nucleophile role is filled by Ser-82. Residues Asp-207 and His-235 contribute to the active site. His-235 provides a ligand contact to substrate.

It belongs to the AB hydrolase superfamily. Carboxylesterase BioH family. Monomer.

The protein localises to the cytoplasm. The catalysed reaction is 6-carboxyhexanoyl-[ACP] methyl ester + H2O = 6-carboxyhexanoyl-[ACP] + methanol + H(+). The protein operates within cofactor biosynthesis; biotin biosynthesis. Its function is as follows. The physiological role of BioH is to remove the methyl group introduced by BioC when the pimeloyl moiety is complete. It allows to synthesize pimeloyl-ACP via the fatty acid synthetic pathway through the hydrolysis of the ester bonds of pimeloyl-ACP esters. The protein is Pimeloyl-[acyl-carrier protein] methyl ester esterase of Cronobacter sakazakii (strain ATCC BAA-894) (Enterobacter sakazakii).